A 329-amino-acid chain; its full sequence is Thioredoxin-like fold domain-containing protein MRL7L homolog, chloroplastic (329 aa).

The transit peptide at 1 to 46 (MALQSCCSSSASVPATCSALCLAEATRAASLFVRPRAAARRLVLAR) directs the protein to the chloroplast. The tract at residues 58-91 (AVQLVLGGRARDDGSESESSDDEDDDEPMQMTDE) is disordered. Over residues 72–85 (SESESSDDEDDDEP) the composition is skewed to acidic residues.

Its subcellular location is the plastid. It localises to the chloroplast stroma. Plays an essential role in early steps of chloroplast development. Involved in the regulation of plastid gene expression. Required for the proper function of the plastid transcriptional machinery and protein accumulation in thylakoid membranes. May function as molecular chaperone to ensure proper organization of the nucleoids in chloroplasts. The polypeptide is Thioredoxin-like fold domain-containing protein MRL7L homolog, chloroplastic (Oryza sativa subsp. japonica (Rice)).